Here is a 382-residue protein sequence, read N- to C-terminus: Alkanesulfonate monooxygenase (382 aa).

The protein belongs to the SsuD family.

It catalyses the reaction an alkanesulfonate + FMNH2 + O2 = an aldehyde + FMN + sulfite + H2O + 2 H(+). Catalyzes the desulfonation of aliphatic sulfonates. In Pseudomonas putida (strain ATCC 47054 / DSM 6125 / CFBP 8728 / NCIMB 11950 / KT2440), this protein is Alkanesulfonate monooxygenase.